A 255-amino-acid polypeptide reads, in one-letter code: Flap endonuclease Xni (255 aa).

Aspartate 105 lines the Mg(2+) pocket. Residues 163–253 enclose the 5'-3' exonuclease domain; that stretch reads QYQMLDFIAL…NLKQFRINPI (91 aa). Residues leucine 172, alanine 173, proline 181, isoleucine 183, and isoleucine 186 each contribute to the K(+) site. The interaction with DNA stretch occupies residues 185 to 190; sequence GIGPKS.

The protein belongs to the Xni family. Requires Mg(2+) as cofactor. K(+) serves as cofactor.

In terms of biological role, has flap endonuclease activity. During DNA replication, flap endonucleases cleave the 5'-overhanging flap structure that is generated by displacement synthesis when DNA polymerase encounters the 5'-end of a downstream Okazaki fragment. The protein is Flap endonuclease Xni of Shewanella frigidimarina (strain NCIMB 400).